The primary structure comprises 590 residues: Multidrug and toxin extrusion protein 1 (590 aa).

At 1-59 (MDSITSYNVTQMNGDTKQEKCDDVLSTSSTQKFCGGCRKKLRSLLPVNYKTEIVELLKL) the chain is on the cytoplasmic side. The helical transmembrane segment at 60–80 (AGPVFISQLMIFLISFVSTVF) threads the bilayer. The Extracellular segment spans residues 81–88 (CGHLGKTE). The chain crosses the membrane as a helical span at residues 89-109 (LAGVALAIAVINVTGISIGSG). Over 110–137 (LASACDTLISQTFGSNNLKRVGVILQRG) the chain is Cytoplasmic. Residues 138–158 (ILILLLACFPCWALLINTEPI) form a helical membrane-spanning segment. Over 159 to 167 (LLAVRQSPN) the chain is Extracellular. A helical membrane pass occupies residues 168-188 (VASLSQLYVKIFMPALPAAFM). Topologically, residues 189–199 (YQLQGRYLQNQ) are cytoplasmic. Residues 200–222 (GIIWPQVITGAAGNILNALINYV) form a helical membrane-spanning segment. Over 223–231 (FLHLLELGV) the chain is Extracellular. The chain crosses the membrane as a helical span at residues 232 to 254 (AGSAAANTISQYSLAVFLYVYIR). At 255–274 (WKNLHKATWDGWSRDCLQEW) the chain is on the cytoplasmic side. The chain crosses the membrane as a helical span at residues 275–294 (GAFIRLALPSMLMLCVEWWT). The Extracellular portion of the chain corresponds to 295–313 (YEIGGFLAGLISETELGAQ). A helical transmembrane segment spans residues 314 to 334 (SVVYELATIAYMFPLGFAVAA). At 335 to 351 (SVRVGNALGAGNTERAK) the chain is on the cytoplasmic side. Residues 352–372 (LSAKVALVCGVLVSCVVATLI) form a helical membrane-spanning segment. Topologically, residues 373–395 (GCTKDVIAYIFTTEEEIVSRVSQ) are extracellular. Residues 396 to 416 (VMIMYGFFHLFDAIAGITGGI) form a helical membrane-spanning segment. At 417 to 430 (VRGAGKQLLGALCN) the chain is on the cytoplasmic side. The helical transmembrane segment at 431-451 (IVGYYFVGFPTGVSLMFALSM) threads the bilayer. A topological domain (extracellular) is located at residue G452. Residues 453–473 (IIGLWIGFFGCVFLQSLFFII) traverse the membrane as a helical segment. At 474-565 (LIYKLDWKKA…TTKQLIVRRG (92 aa)) the chain is on the cytoplasmic side. A helical membrane pass occupies residues 566 to 586 (LAVLLMVLILAGGIVLNEMLV). Residues 587 to 590 (RYLR) lie on the Extracellular side of the membrane.

Belongs to the multi antimicrobial extrusion (MATE) (TC 2.A.66.1) family.

The protein resides in the cell membrane. Its function is as follows. Solute transporter for tetraethylammonium (TEA), cimetidine, metformin, guanidine, N-methylnicotinamide (NMN) and also the zwitterionic cephalosporin cephalexin. Responsible for the secretion of cationic drugs across the brush border membranes. The sequence is that of Multidrug and toxin extrusion protein 1 (slc47a1) from Danio rerio (Zebrafish).